A 434-amino-acid chain; its full sequence is L-2-hydroxyglutarate dehydrogenase, mitochondrial (434 aa).

The protein belongs to the L2HGDH family. The cofactor is FAD.

The protein resides in the mitochondrion. It catalyses the reaction (S)-2-hydroxyglutarate + A = 2-oxoglutarate + AH2. The sequence is that of L-2-hydroxyglutarate dehydrogenase, mitochondrial from Caenorhabditis briggsae.